The chain runs to 329 residues: Malate dehydrogenase (329 aa).

12-18 (GAAGQIG) serves as a coordination point for NAD(+). Substrate contacts are provided by Arg95 and Arg101. NAD(+) contacts are provided by residues Asn108, Gln115, and 132–134 (VGN). Asn134 and Arg165 together coordinate substrate. His190 functions as the Proton acceptor in the catalytic mechanism.

Belongs to the LDH/MDH superfamily. MDH type 2 family.

The catalysed reaction is (S)-malate + NAD(+) = oxaloacetate + NADH + H(+). Its function is as follows. Catalyzes the reversible oxidation of malate to oxaloacetate. This chain is Malate dehydrogenase, found in Bordetella bronchiseptica (strain ATCC BAA-588 / NCTC 13252 / RB50) (Alcaligenes bronchisepticus).